The chain runs to 513 residues: Na(+)/H(+) antiporter NhaB (513 aa).

12 helical membrane-spanning segments follow: residues 23-43 (LALI…PFVA), 52-72 (IFTL…LLAI), 97-117 (LLLM…LFIF), 120-140 (LLLS…AAAF), 144-164 (FLDA…FYGI), 202-222 (LMMH…VGEP), 238-258 (FFLR…LTCL), 303-323 (AIIG…VGLI), 348-368 (TESL…AVII), 391-411 (LFYI…VGTI), 447-467 (ATPN…APLI), and 475-495 (VWMA…CVEF).

It belongs to the NhaB Na(+)/H(+) (TC 2.A.34) antiporter family.

It is found in the cell inner membrane. It catalyses the reaction 2 Na(+)(in) + 3 H(+)(out) = 2 Na(+)(out) + 3 H(+)(in). In terms of biological role, na(+)/H(+) antiporter that extrudes sodium in exchange for external protons. The polypeptide is Na(+)/H(+) antiporter NhaB (Escherichia coli O6:K15:H31 (strain 536 / UPEC)).